Here is a 385-residue protein sequence, read N- to C-terminus: Meiotic recombination protein SPO11-2 (385 aa).

One can recognise a Topo IIA-type catalytic domain in the interval 24–169 (LPPAEVRARI…LGIMASSRGA (146 aa)). Tyr126 functions as the O-(5'-phospho-DNA)-tyrosine intermediate in the catalytic mechanism. Glu219 and Asp272 together coordinate Mg(2+).

It belongs to the TOP6A family. Interacts with TOP6B. Requires Mg(2+) as cofactor. As to expression, highly expressed in flowers before pollination. Expressed in roots and shoots.

Its subcellular location is the nucleus. The enzyme catalyses ATP-dependent breakage, passage and rejoining of double-stranded DNA.. In terms of biological role, required for meiotic recombination. Mediates DNA cleavage that forms the double-strand breaks (DSB) that initiate meiotic recombination. In Oryza sativa subsp. indica (Rice), this protein is Meiotic recombination protein SPO11-2 (SPO11-2).